The following is a 181-amino-acid chain: Ribose 1,5-bisphosphate phosphokinase PhnN (181 aa).

12–19 contributes to the ATP binding site; the sequence is GPSGAGKD.

It belongs to the ribose 1,5-bisphosphokinase family.

It catalyses the reaction alpha-D-ribose 1,5-bisphosphate + ATP = 5-phospho-alpha-D-ribose 1-diphosphate + ADP. It functions in the pathway metabolic intermediate biosynthesis; 5-phospho-alpha-D-ribose 1-diphosphate biosynthesis; 5-phospho-alpha-D-ribose 1-diphosphate from D-ribose 5-phosphate (route II): step 3/3. Functionally, catalyzes the phosphorylation of ribose 1,5-bisphosphate to 5-phospho-D-ribosyl alpha-1-diphosphate (PRPP). This chain is Ribose 1,5-bisphosphate phosphokinase PhnN, found in Acidiphilium cryptum (strain JF-5).